The primary structure comprises 225 residues: MISWINGDLVDLWQTNQKSFVLINCQGLGYEIQILESFFLKLKTNQISTKNITLWIKHIKKEDSDLLFGFTSKDQKNFFIEILSIRGVGSQIGIGILNKFSISEVINAIKTQDKKLICSVPGIGQKMSERLILELKSKFKSEILSEEEKSKDEFEIKDPEIIKMIEDLQLTLQSLSYKNKEINTILPIIIKEIDHLGKKENSLSFEKLLKLAMHYLDEDSSNKDR.

Positions 1–71 (MISWINGDLV…EDSDLLFGFT (71 aa)) are domain I. The tract at residues 72–150 (SKDQKNFFIE…SEILSEEEKS (79 aa)) is domain II. A flexible linker region spans residues 151-161 (KDEFEIKDPEI). A domain III region spans residues 161 to 225 (IIKMIEDLQL…LDEDSSNKDR (65 aa)).

The protein belongs to the RuvA family. As to quaternary structure, homotetramer. Forms an RuvA(8)-RuvB(12)-Holliday junction (HJ) complex. HJ DNA is sandwiched between 2 RuvA tetramers; dsDNA enters through RuvA and exits via RuvB. An RuvB hexamer assembles on each DNA strand where it exits the tetramer. Each RuvB hexamer is contacted by two RuvA subunits (via domain III) on 2 adjacent RuvB subunits; this complex drives branch migration. In the full resolvosome a probable DNA-RuvA(4)-RuvB(12)-RuvC(2) complex forms which resolves the HJ.

The protein resides in the cytoplasm. The RuvA-RuvB-RuvC complex processes Holliday junction (HJ) DNA during genetic recombination and DNA repair, while the RuvA-RuvB complex plays an important role in the rescue of blocked DNA replication forks via replication fork reversal (RFR). RuvA specifically binds to HJ cruciform DNA, conferring on it an open structure. The RuvB hexamer acts as an ATP-dependent pump, pulling dsDNA into and through the RuvAB complex. HJ branch migration allows RuvC to scan DNA until it finds its consensus sequence, where it cleaves and resolves the cruciform DNA. The protein is Holliday junction branch migration complex subunit RuvA of Prochlorococcus marinus (strain AS9601).